The chain runs to 1025 residues: Multidrug resistance protein MdtC (1025 aa).

12 helical membrane passes run 3 to 23, 333 to 353, 360 to 380, 387 to 407, 431 to 451, 463 to 483, 528 to 548, 853 to 873, 875 to 895, 897 to 917, 953 to 973, and 984 to 1004; these read FFAL…AITL, EVEQ…FLFL, IIPA…MYLC, LSLM…IVVL, VGFT…PLLL, FAVT…TLTP, LVGV…ISIP, VILI…LYES, VHPL…LLAL, LFNA…IGIV, PIMM…LSGG, and ITIV…TPVV.

Belongs to the resistance-nodulation-cell division (RND) (TC 2.A.6) family. MdtC subfamily. In terms of assembly, part of a tripartite efflux system composed of MdtA, MdtB and MdtC. MdtC forms a heteromultimer with MdtB.

It localises to the cell inner membrane. The MdtABC tripartite complex confers resistance against novobiocin and deoxycholate. This chain is Multidrug resistance protein MdtC, found in Escherichia fergusonii (strain ATCC 35469 / DSM 13698 / CCUG 18766 / IAM 14443 / JCM 21226 / LMG 7866 / NBRC 102419 / NCTC 12128 / CDC 0568-73).